Reading from the N-terminus, the 352-residue chain is tRNA uridine(34) hydroxylase (352 aa).

The Rhodanese domain occupies 144-238; it reads SDPDVILIDT…YLEEVPASDS (95 aa). Cys-198 (cysteine persulfide intermediate) is an active-site residue.

It belongs to the TrhO family.

The catalysed reaction is uridine(34) in tRNA + AH2 + O2 = 5-hydroxyuridine(34) in tRNA + A + H2O. Catalyzes oxygen-dependent 5-hydroxyuridine (ho5U) modification at position 34 in tRNAs. This chain is tRNA uridine(34) hydroxylase, found in Psychrobacter arcticus (strain DSM 17307 / VKM B-2377 / 273-4).